The sequence spans 310 residues: Upstream stimulatory factor 1 (310 aa).

Residues M1 to I17 are compositionally biased toward polar residues. 2 disordered regions span residues M1–E26 and Q171–R209. Over residues T194–R209 the composition is skewed to basic and acidic residues. A bHLH domain is found at K199–L254. Positions L271–L292 are leucine-zipper. A Glycyl lysine isopeptide (Lys-Gly) (interchain with G-Cter in SUMO2) cross-link involves residue K306.

Efficient DNA binding requires dimerization with another bHLH protein. Binds DNA as a homodimer or a heterodimer (USF1/USF2).

Its subcellular location is the nucleus. Functionally, transcription factor that binds to a symmetrical DNA sequence (E-boxes) (5'-CACGTG-3') that is found in a variety of viral and cellular promoters. Regulates the expression of the surfactant protein-A (SP-A) gene. This chain is Upstream stimulatory factor 1 (USF1), found in Oryctolagus cuniculus (Rabbit).